Reading from the N-terminus, the 484-residue chain is Glutamate--tRNA ligase (484 aa).

A 'HIGH' region motif is present at residues 11–21 (PSPTGYLHIGN). Positions 252–256 (KLSKR) match the 'KMSKS' region motif. An ATP-binding site is contributed by lysine 255.

Belongs to the class-I aminoacyl-tRNA synthetase family. Glutamate--tRNA ligase type 1 subfamily. Monomer.

The protein resides in the cytoplasm. The catalysed reaction is tRNA(Glu) + L-glutamate + ATP = L-glutamyl-tRNA(Glu) + AMP + diphosphate. In terms of biological role, catalyzes the attachment of glutamate to tRNA(Glu) in a two-step reaction: glutamate is first activated by ATP to form Glu-AMP and then transferred to the acceptor end of tRNA(Glu). The chain is Glutamate--tRNA ligase from Staphylococcus aureus (strain Newman).